The chain runs to 545 residues: Glucose-6-phosphate isomerase (545 aa).

The active-site Proton donor is glutamate 351. Residues histidine 382 and lysine 510 contribute to the active site.

This sequence belongs to the GPI family.

It is found in the cytoplasm. The enzyme catalyses alpha-D-glucose 6-phosphate = beta-D-fructose 6-phosphate. It functions in the pathway carbohydrate biosynthesis; gluconeogenesis. It participates in carbohydrate degradation; glycolysis; D-glyceraldehyde 3-phosphate and glycerone phosphate from D-glucose: step 2/4. Catalyzes the reversible isomerization of glucose-6-phosphate to fructose-6-phosphate. This Shewanella amazonensis (strain ATCC BAA-1098 / SB2B) protein is Glucose-6-phosphate isomerase.